The sequence spans 504 residues: Apoptosis inhibitor 5 (504 aa).

Positions 1–360 are ARM-like and Heat-like helical repeats; it reads MPTVEELYRN…HQLGRKLPDF (360 aa). Position 251 is an N6-acetyllysine (Lys-251). The tract at residues 370-391 is leucine-zipper; that stretch reads LKDFKIRLQYFARGLQVYIRQL. Residue Thr-399 is modified to Phosphothreonine. A disordered region spans residues 452-504; it reads GQKRASEDTTSGSPPKKSSAGPKRDARQIYNPPSGKYSSNLGNFNYERSLQGK. The Nuclear localization signal motif lies at 454-475; sequence KRASEDTTSGSPPKKSSAGPKR. A phosphoserine mark is found at Ser-462, Ser-464, and Ser-469. The segment covering 462 to 472 has biased composition (low complexity); it reads SGSPPKKSSAG. Polar residues predominate over residues 487 to 504; that stretch reads KYSSNLGNFNYERSLQGK.

The protein belongs to the API5 family. Monomer. Interacts with FGF2 and ACIN1. In terms of processing, acetylation at Lys-251 impairs antiapoptotic function.

Its subcellular location is the nucleus. It localises to the cytoplasm. In terms of biological role, antiapoptotic factor that may have a role in protein assembly. Negatively regulates ACIN1. By binding to ACIN1, it suppresses ACIN1 cleavage from CASP3 and ACIN1-mediated DNA fragmentation. Also known to efficiently suppress E2F1-induced apoptosis. This chain is Apoptosis inhibitor 5 (API5), found in Pongo abelii (Sumatran orangutan).